Consider the following 396-residue polypeptide: S-adenosylmethionine synthase (396 aa).

ATP is bound at residue H16. Residue D18 coordinates Mg(2+). Residue E44 participates in K(+) binding. Positions 57 and 100 each coordinate L-methionine. The flexible loop stretch occupies residues 100-110 (QSPDIAQGVNE). Residues 175-177 (DAK), 242-243 (RF), D251, 257-258 (RK), A274, and K278 each bind ATP. Residue D251 coordinates L-methionine. K282 provides a ligand contact to L-methionine.

The protein belongs to the AdoMet synthase family. In terms of assembly, homotetramer; dimer of dimers. The cofactor is Mg(2+). K(+) serves as cofactor.

The protein resides in the cytoplasm. The catalysed reaction is L-methionine + ATP + H2O = S-adenosyl-L-methionine + phosphate + diphosphate. Its pathway is amino-acid biosynthesis; S-adenosyl-L-methionine biosynthesis; S-adenosyl-L-methionine from L-methionine: step 1/1. Functionally, catalyzes the formation of S-adenosylmethionine (AdoMet) from methionine and ATP. The overall synthetic reaction is composed of two sequential steps, AdoMet formation and the subsequent tripolyphosphate hydrolysis which occurs prior to release of AdoMet from the enzyme. In Streptococcus suis (strain 05ZYH33), this protein is S-adenosylmethionine synthase.